Consider the following 495-residue polypeptide: Averantin hydroxylase (495 aa).

Residues 12-32 (ILLLIVLTVLTPPSLALYRLW) traverse the membrane as a helical segment. N-linked (GlcNAc...) asparagine glycans are attached at residues asparagine 258 and asparagine 289. Cysteine 436 lines the heme pocket.

This sequence belongs to the cytochrome P450 family. Heme is required as a cofactor.

The protein resides in the membrane. The enzyme catalyses (1'S)-averantin + reduced [NADPH--hemoprotein reductase] + O2 = (1'S,5'R)-5'-hydroxyaverantin + oxidized [NADPH--hemoprotein reductase] + H2O. The catalysed reaction is (1'S)-averantin + reduced [NADPH--hemoprotein reductase] + O2 = (1'S,5'S)-5'-hydroxyaverantin + oxidized [NADPH--hemoprotein reductase] + H2O + H(+). The protein operates within mycotoxin biosynthesis; aflatoxin biosynthesis. Functionally, averantin hydroxylase; part of the gene cluster that mediates the biosynthesis of aflatoxins, a group of polyketide-derived furanocoumarins, and part of the most toxic and carcinogenic compounds among the known mycotoxins. The four major aflatoxins produced by A.parasiticus are aflatoxin B1 (AFB1), aflatoxin B2 (AFB2), aflatoxin G1 (AFG1) and aflatoxin G2 (AFG2). Within the aflatoxin pathway, the cytochrome P450 monooxygenase aflG catalyzes the hydroxylation of AVN to 5'hydroxyaverantin (HAVN). The biosynthesis of aflatoxins begins with the norsolorinic acid synthase aflC that combines a hexanoyl starter unit produced by the fatty acid synthase aflA/aflB and 7 malonyl-CoA extender units to synthesize the precursor NOR. The second step is the conversion of NOR to averantin and requires the norsolorinic acid ketoreductase aflD, which catalyzes the dehydration of norsolorinic acid to form (1'S)-averantin. The norsolorinic acid reductases aflE and aflF may also play a role in the conversion of NOR to AVN. The cytochrome P450 monooxygenase aflG then catalyzes the hydroxylation of AVN to 5'hydroxyaverantin (HAVN). The next step is performed by the 5'-hydroxyaverantin dehydrogenase aflH that transforms HAVN to 5'-oxoaverantin (OAVN) which is further converted to averufin (AVF) by aflK that plays a dual role in the pathway, as a 5'-oxoaverantin cyclase that mediates conversion of 5'-oxoaverantin, as well as a versicolorin B synthase in a later step in the pathway. The averufin oxidase aflI catalyzes the conversion of AVF to versiconal hemiacetal acetate (VHA). VHA is then the substrate for the versiconal hemiacetal acetate esterase aflJ to yield versiconal (VAL). Versicolorin B synthase aflK then converts VAL to versicolorin B (VERB) by closing the bisfuran ring of aflatoxin which is required for DNA-binding, thus giving to aflatoxin its activity as a mutagen. Then, the activity of the versicolorin B desaturase aflL leads to versicolorin A (VERA). A branch point starts from VERB since it can also be converted to dihydrodemethylsterigmatocystin (DMDHST), probably also by aflL, VERA being a precursor for aflatoxins B1 and G1, and DMDHST for aflatoxins B2 and G2. Next, the versicolorin reductase aflM and the cytochrome P450 monooxygenase aflN are involved in conversion of VERA to demethylsterigmatocystin (DMST). AflX and aflY seem also involved in this step, through probable aflX-mediated epoxide ring-opening step following versicolorin A oxidation and aflY-mediated Baeyer-Villiger oxidation required for the formation of the xanthone ring. The methyltransferase aflO then leads to the modification of DMST to sterigmatocystin (ST), and of DMDHST to dihydrosterigmatocystin (DHST). Both ST and DHST are then substrates of the O-methyltransferase aflP to yield O-methylsterigmatocystin (OMST) and dihydro-O-methylsterigmatocystin (DHOMST), respectively. Finally OMST is converted to aflatoxins B1 and G1, and DHOMST to aflatoxins B2 and G2, via the action of several enzymes including O-methylsterigmatocystin oxidoreductase aflQ, the cytochrome P450 monooxygenase aflU, but also the NADH-dependent flavin oxidoreductase nadA which is specifically required for the synthesis of AFG1. In Aspergillus parasiticus (strain ATCC 56775 / NRRL 5862 / SRRC 143 / SU-1), this protein is Averantin hydroxylase.